A 221-amino-acid chain; its full sequence is Factor arrest protein 7 (221 aa).

In terms of assembly, component of a complex at least composed of FAR3, FAR7, FAR8, FAR10, FAR11 and VPS64.

Functionally, participates in the control of the reentry into the cell cycle following pheromone treatment. In Saccharomyces cerevisiae (strain ATCC 204508 / S288c) (Baker's yeast), this protein is Factor arrest protein 7 (FAR7).